A 114-amino-acid chain; its full sequence is Large ribosomal subunit protein P2 (114 aa).

Over residues 74–83 (AAAAGGGGGD) the composition is skewed to gly residues. Positions 74 to 114 (AAAAGGGGGDAPAAAAEEPKKEEKSEEESDEELGFSLFDDN) are disordered. Residues 98–114 (SEEESDEELGFSLFDDN) are compositionally biased toward acidic residues.

The protein belongs to the eukaryotic ribosomal protein P1/P2 family. In terms of assembly, P1 and P2 exist as dimers at the large ribosomal subunit. Phosphorylated.

Plays an important role in the elongation step of protein synthesis. The protein is Large ribosomal subunit protein P2 of Parthenium argentatum (Guayule rubber plant).